Here is a 1658-residue protein sequence, read N- to C-terminus: Cortactin-binding protein 2 (1658 aa).

Disordered stretches follow at residues 1-24 (MATD…GATA), 203-235 (KTKT…SEFD), 348-437 (GAAL…LHPG), 451-475 (GNAN…SPTS), and 495-612 (RFTS…PPKP). Residues 119 to 276 (RKMQERMSTQ…EQLKRGNDSK (158 aa)) are a coiled coil. The span at 214 to 235 (SAEKRRSTEMEAQMEKQLSEFD) shows a compositional bias: basic and acidic residues. A compositionally biased stretch (low complexity) spans 385–394 (GPSAGSASST). The segment covering 399-418 (NSTAPPTVQTPGIAPQSYSQ) has biased composition (polar residues). An Asymmetric dimethylarginine modification is found at R495. Low complexity predominate over residues 509–520 (AAPTGDGGTCPP). The span at 580-590 (TMASPPSSLPQ) shows a compositional bias: polar residues. 6 ANK repeats span residues 706–736 (GRPT…DINY), 740–769 (DGHS…QVNA), 773–802 (NGFT…NINH), 806–835 (EGQT…DRSV), 839–868 (DGWT…PACR), and 909–939 (EGWT…EPER). Residues 1448–1478 (ESGAWRKVSTSPRKKSGRFSPPSWNKPGLSE) are disordered. S1521 carries the phosphoserine modification. Disordered regions lie at residues 1538–1595 (RSES…NSQS) and 1611–1642 (PRSK…NTKE). Over residues 1539–1558 (SESDISKIADSRDDLRRFDG) the composition is skewed to basic and acidic residues. 2 stretches are compositionally biased toward polar residues: residues 1559–1569 (SRNNPAFSTVN) and 1581–1595 (PLSS…NSQS). Residues 1619–1633 (SQNTKRSSSSSNTRQ) are compositionally biased toward low complexity.

As to quaternary structure, interacts with CTTN/cortactin SH3 domain. Interacts with STRN, STRN4/zinedin and MOB4/phocein; this interactions mediate the association with the STRIPAK core complex and may regulate dendritic spine distribution of the STRIPAK complex in hippocampal neurons. Activation of glutamate receptors weakens the interaction with STRN and STRN4.

The protein resides in the cytoplasm. It localises to the cell cortex. The protein localises to the cell projection. It is found in the dendritic spine. Its function is as follows. Regulates the dendritic spine distribution of CTTN/cortactin in hippocampal neurons, and thus controls dendritic spinogenesis and dendritic spine maintenance. Associates with the striatin-interacting phosphatase and kinase (STRIPAK) core complex to regulate dendritic spine distribution of the STRIPAK complex in hippocampal neurons. This is Cortactin-binding protein 2 (CTTNBP2) from Neofelis nebulosa (Clouded leopard).